Here is a 274-residue protein sequence, read N- to C-terminus: MRHTLPIAPQFYVTAPQPCPYLEGRMERKLFTSLQGDGVEQLNNSLSQQGFRRSQNVLYRPSCSDCSACMSARISVADFKPTRSQRKTLNRNRHLDRRATSPWATEDQYALFRDYLDQRHADGGMADMDVFEYAAMVEETPIRTRVVEYTDLDTNALTAVSLTDVLEDGLSMVYSFYAPNLPQNSLGTFMVLDHIEIAREAGLPYVYLGYWVPGSQKMGYKAKFSGLEVYFGGEWTPLKDPESFTAEDHPLSTAPVAEQVANIQLPQGTSPKKR.

The protein belongs to the R-transferase family. Bpt subfamily.

It localises to the cytoplasm. It catalyses the reaction N-terminal L-glutamyl-[protein] + L-leucyl-tRNA(Leu) = N-terminal L-leucyl-L-glutamyl-[protein] + tRNA(Leu) + H(+). It carries out the reaction N-terminal L-aspartyl-[protein] + L-leucyl-tRNA(Leu) = N-terminal L-leucyl-L-aspartyl-[protein] + tRNA(Leu) + H(+). In terms of biological role, functions in the N-end rule pathway of protein degradation where it conjugates Leu from its aminoacyl-tRNA to the N-termini of proteins containing an N-terminal aspartate or glutamate. The chain is Aspartate/glutamate leucyltransferase from Ruegeria sp. (strain TM1040) (Silicibacter sp.).